Here is a 305-residue protein sequence, read N- to C-terminus: Porphobilinogen deaminase (305 aa).

Residue Cys-240 is modified to S-(dipyrrolylmethanemethyl)cysteine.

The protein belongs to the HMBS family. In terms of assembly, monomer. The cofactor is dipyrromethane.

It carries out the reaction 4 porphobilinogen + H2O = hydroxymethylbilane + 4 NH4(+). Its pathway is porphyrin-containing compound metabolism; protoporphyrin-IX biosynthesis; coproporphyrinogen-III from 5-aminolevulinate: step 2/4. Tetrapolymerization of the monopyrrole PBG into the hydroxymethylbilane pre-uroporphyrinogen in several discrete steps. The protein is Porphobilinogen deaminase (hemC) of Xylella fastidiosa (strain 9a5c).